The primary structure comprises 1804 residues: Obscurin-like protein 1 (1804 aa).

Phosphoserine is present on S10. 4 consecutive Ig-like domains span residues 12–100 (PCFL…AAVT), 128–225 (PKFL…ALLQ), 241–330 (PKPV…QTLS), and 339–425 (PRLR…ANVT). Residues 17–19 (FPR) form an interaction with TTN region. A disulfide bond links C33 and C84. The interval 85–94 (RARNAAGEAY) is interaction with TTN. An intrachain disulfide couples C149 to C209. The interval 227–249 (HQPRESPPQDPDENPKPVLEPLK) is disordered. Intrachain disulfides connect C267–C319 and C362–C412. Residues 517–615 (PPGPPVMVEM…FNGSAHLVPT (99 aa)) form the Fibronectin type-III domain. 10 Ig-like domains span residues 720 to 800 (PQDK…FGVT), 804 to 891 (PPVH…FTVT), 902 to 982 (PSSE…FTIT), 986 to 1075 (PPVR…VTVT), 1078 to 1165 (PERI…FNVS), 1176 to 1261 (PEAA…FNVQ), 1266 to 1442 (PPVK…ARLS), 1536 to 1621 (PVTI…ARLT), 1625 to 1694 (REVS…EDTG), and 1702 to 1798 (PAQS…ADTQ). Intrachain disulfides connect C738–C788, C829–C879, C920–C970, C1011–C1061, C1103–C1153, C1195–C1245, C1289–C1430, and C1558–C1608.

As to quaternary structure, component of the 3M complex, composed of core components CUL7, CCDC8 and OBSL1. Interacts with CCDC8. Interacts with CUL7; the interaction is direct. Interacts with FBXW8. Interacts (via N-terminal Ig-like domain) with TTN/titin (via C-terminal Ig-like domain); the interaction is direct.

Its subcellular location is the cytoplasm. The protein resides in the perinuclear region. The protein localises to the golgi apparatus. In terms of biological role, core component of the 3M complex, a complex required to regulate microtubule dynamics and genome integrity. It is unclear how the 3M complex regulates microtubules, it could act by controlling the level of a microtubule stabilizer. Acts as a regulator of the Cul7-RING(FBXW8) ubiquitin-protein ligase, playing a critical role in the ubiquitin ligase pathway that regulates Golgi morphogenesis and dendrite patterning in brain. Required to localize CUL7 to the Golgi apparatus in neurons. The sequence is that of Obscurin-like protein 1 (Obsl1) from Mus musculus (Mouse).